The primary structure comprises 623 residues: Aspartate--tRNA(Asp/Asn) ligase (623 aa).

Residue E175 coordinates L-aspartate. The interval 199–202 (QQYK) is aspartate. Residues R221 and H483 each coordinate L-aspartate. Residue 221 to 223 (RDE) coordinates ATP. ATP is bound at residue E517. Position 524 (R524) interacts with L-aspartate. Position 569-572 (569-572 (GVDR)) interacts with ATP.

This sequence belongs to the class-II aminoacyl-tRNA synthetase family. Type 1 subfamily. Homodimer.

It localises to the cytoplasm. The enzyme catalyses tRNA(Asx) + L-aspartate + ATP = L-aspartyl-tRNA(Asx) + AMP + diphosphate. In terms of biological role, aspartyl-tRNA synthetase with relaxed tRNA specificity since it is able to aspartylate not only its cognate tRNA(Asp) but also tRNA(Asn). Reaction proceeds in two steps: L-aspartate is first activated by ATP to form Asp-AMP and then transferred to the acceptor end of tRNA(Asp/Asn). In Xanthobacter autotrophicus (strain ATCC BAA-1158 / Py2), this protein is Aspartate--tRNA(Asp/Asn) ligase.